Reading from the N-terminus, the 796-residue chain is Protocadherin beta-3 (796 aa).

An N-terminal signal peptide occupies residues M1–A26. Over G27–L690 the chain is Extracellular. Cadherin domains follow at residues V35–F133, M138–F242, Y247–L347, V352–F451, and Y456–V561. Residue N169 is glycosylated (N-linked (GlcNAc...) asparagine). 2 N-linked (GlcNAc...) asparagine glycosylation sites follow: N418 and N436. N567 carries N-linked (GlcNAc...) asparagine glycosylation. Residues G568 to L671 enclose the Cadherin 6 domain. The chain crosses the membrane as a helical span at residues V691–V711. The Cytoplasmic segment spans residues R712–S796.

The protein resides in the cell membrane. Its function is as follows. Potential calcium-dependent cell-adhesion protein. May be involved in the establishment and maintenance of specific neuronal connections in the brain. This chain is Protocadherin beta-3 (PCDHB3), found in Homo sapiens (Human).